Consider the following 445-residue polypeptide: GTPase Der (445 aa).

2 consecutive EngA-type G domains span residues 3 to 167 and 180 to 353; these read PVIA…YAGE and IKIA…AAAM. Residues 9 to 16, 56 to 60, 119 to 122, 186 to 193, 233 to 237, and 298 to 301 each bind GTP; these read GRPNVGKS, DTGGF, NKAE, DTAGL, and NKWD. Residues 354-438 enclose the KH-like domain; that stretch reads KKLPTPKLTR…PLRIEFRSST (85 aa).

It belongs to the TRAFAC class TrmE-Era-EngA-EngB-Septin-like GTPase superfamily. EngA (Der) GTPase family. In terms of assembly, associates with the 50S ribosomal subunit.

Functionally, GTPase that plays an essential role in the late steps of ribosome biogenesis. The sequence is that of GTPase Der from Burkholderia pseudomallei (strain 1106a).